The primary structure comprises 84 residues: GTP cyclohydrolase 1 feedback regulatory protein (84 aa).

This sequence belongs to the GFRP family. In terms of assembly, homopentamer. Forms a complex with GCH1 where a GCH1 homodecamer is sandwiched by two GFRP homopentamers.

Its subcellular location is the nucleus. It is found in the nucleus membrane. The protein resides in the cytoplasm. It localises to the cytosol. In terms of biological role, mediates tetrahydrobiopterin inhibition of GTP cyclohydrolase 1. This chain is GTP cyclohydrolase 1 feedback regulatory protein (gchfr), found in Xenopus laevis (African clawed frog).